Consider the following 553-residue polypeptide: Protein spartin (553 aa).

Residues Ile15–Val96 form the MIT domain. Residues Asp105–Asn130 are disordered. The span at Glu113–Arg123 shows a compositional bias: basic and acidic residues. In terms of domain architecture, Senescence spans Ile325–Lys509.

As to quaternary structure, interacts with Eps-15 (via C-terminal region); the interaction is required for spartin localization to the NMJ presynaptic membrane. Expressed in larval brain, ventral nerve cord and neuropil (at protein level).

It localises to the presynaptic cell membrane. It is found in the early endosome. The protein localises to the lipid droplet. Its function is as follows. During postembryonic development, functions with endocytic adapter Eps-15 in neurons to restrain synaptic growth, by inhibiting BMP signaling, and to control synaptic endocytosis. Required presynaptically for neuromuscular junction (NMJ) neurotransmission. Inhibits neuronal BMP signaling by promoting endocytic internalization and subsequent endosomal trafficking of the BMP receptor wit. In this way, regulates the Fmr1 translational regulator controlling Futsch expression to modulate neuronal microtubule stability, which controls both synaptogenesis and neuronal survival. The polypeptide is Protein spartin (Drosophila melanogaster (Fruit fly)).